A 132-amino-acid chain; its full sequence is MHQAGHYSWPSPAVNSSSEQEPQRQLPEVLSGTWEQPRVDGLPVVTVIVAVFVLLAVCIIVAVHFGPRLHQGHATLPTEPPTPKPDGGIYLIHWRVLGPQDSPEEAPPGPLVPGSCPAPDGPRPSIDEVTCL.

The disordered stretch occupies residues 1 to 28; it reads MHQAGHYSWPSPAVNSSSEQEPQRQLPE. N-linked (GlcNAc...) asparagine glycosylation occurs at Asn15. A helical membrane pass occupies residues 43-63; that stretch reads PVVTVIVAVFVLLAVCIIVAV. The segment at 99–132 is disordered; sequence PQDSPEEAPPGPLVPGSCPAPDGPRPSIDEVTCL.

It localises to the membrane. This chain is Small integral membrane protein 33, found in Homo sapiens (Human).